A 107-amino-acid polypeptide reads, in one-letter code: Nucleoid-associated protein Msil_0275 (107 aa).

The protein belongs to the YbaB/EbfC family. In terms of assembly, homodimer.

It localises to the cytoplasm. Its subcellular location is the nucleoid. Functionally, binds to DNA and alters its conformation. May be involved in regulation of gene expression, nucleoid organization and DNA protection. The sequence is that of Nucleoid-associated protein Msil_0275 from Methylocella silvestris (strain DSM 15510 / CIP 108128 / LMG 27833 / NCIMB 13906 / BL2).